The sequence spans 210 residues: Isochorismatase domain-containing protein 2B (210 aa).

Lysine 178 bears the N6-succinyllysine mark.

The protein belongs to the isochorismatase family. As to quaternary structure, interacts with CDKN2A. As to expression, ubiquitous. Expressed predominantly in uterus, stomach and urinary tract.

Its subcellular location is the cytoplasm. The protein localises to the nucleus. This Mus musculus (Mouse) protein is Isochorismatase domain-containing protein 2B (Isoc2b).